The following is a 411-amino-acid chain: Citrate synthase (411 aa).

Residues His-304 and Asp-363 contribute to the active site.

The protein belongs to the citrate synthase family.

It carries out the reaction oxaloacetate + acetyl-CoA + H2O = citrate + CoA + H(+). The protein operates within carbohydrate metabolism; tricarboxylic acid cycle; isocitrate from oxaloacetate: step 1/2. This Rickettsia australis protein is Citrate synthase (gltA).